Here is a 740-residue protein sequence, read N- to C-terminus: Probable RNA-dependent RNA polymerase 1 (740 aa).

Belongs to the RdRP family.

It carries out the reaction RNA(n) + a ribonucleoside 5'-triphosphate = RNA(n+1) + diphosphate. Its function is as follows. Probably involved in the RNA silencing pathway and required for the generation of small interfering RNAs (siRNAs). In Oryza sativa subsp. japonica (Rice), this protein is Probable RNA-dependent RNA polymerase 1 (RDR1).